We begin with the raw amino-acid sequence, 301 residues long: Phosphatidylglycerol--prolipoprotein diacylglyceryl transferase (301 aa).

The next 3 membrane-spanning stretches (helical) occupy residues Leu17–Gly37, Met59–Tyr79, and Gly97–Tyr117. A 1,2-diacyl-sn-glycero-3-phospho-(1'-sn-glycerol) is bound at residue Arg142. A run of 2 helical transmembrane segments spans residues Met230–Phe250 and Leu265–Trp285.

It belongs to the Lgt family.

Its subcellular location is the cell inner membrane. It catalyses the reaction L-cysteinyl-[prolipoprotein] + a 1,2-diacyl-sn-glycero-3-phospho-(1'-sn-glycerol) = an S-1,2-diacyl-sn-glyceryl-L-cysteinyl-[prolipoprotein] + sn-glycerol 1-phosphate + H(+). Its pathway is protein modification; lipoprotein biosynthesis (diacylglyceryl transfer). Functionally, catalyzes the transfer of the diacylglyceryl group from phosphatidylglycerol to the sulfhydryl group of the N-terminal cysteine of a prolipoprotein, the first step in the formation of mature lipoproteins. This chain is Phosphatidylglycerol--prolipoprotein diacylglyceryl transferase, found in Paraburkholderia phytofirmans (strain DSM 17436 / LMG 22146 / PsJN) (Burkholderia phytofirmans).